The primary structure comprises 178 residues: Transcription factor E (178 aa).

One can recognise an HTH TFE/IIEalpha-type domain in the interval 4–88 (AEDLFINLAK…YWKPNIDQIN (85 aa)).

Belongs to the TFE family. In terms of assembly, monomer. Interaction with RNA polymerase subunits RpoF and RpoE is necessary for Tfe stimulatory transcription activity. Able to interact with Tbp and RNA polymerase in the absence of DNA promoter. Interacts both with the preinitiation and elongation complexes.

In terms of biological role, transcription factor that plays a role in the activation of archaeal genes transcribed by RNA polymerase. Facilitates transcription initiation by enhancing TATA-box recognition by TATA-box-binding protein (Tbp), and transcription factor B (Tfb) and RNA polymerase recruitment. Not absolutely required for transcription in vitro, but particularly important in cases where Tbp or Tfb function is not optimal. It dynamically alters the nucleic acid-binding properties of RNA polymerases by stabilizing the initiation complex and destabilizing elongation complexes. Seems to translocate with the RNA polymerase following initiation and acts by binding to the non template strand of the transcription bubble in elongation complexes. This is Transcription factor E from Saccharolobus islandicus (strain L.S.2.15 / Lassen #1) (Sulfolobus islandicus).